The chain runs to 231 residues: Large ribosomal subunit protein uL1 (231 aa).

It belongs to the universal ribosomal protein uL1 family. In terms of assembly, part of the 50S ribosomal subunit.

In terms of biological role, binds directly to 23S rRNA. The L1 stalk is quite mobile in the ribosome, and is involved in E site tRNA release. Functionally, protein L1 is also a translational repressor protein, it controls the translation of the L11 operon by binding to its mRNA. The polypeptide is Large ribosomal subunit protein uL1 (Moorella thermoacetica (strain ATCC 39073 / JCM 9320)).